The sequence spans 94 residues: MSEQTSAASTTDRGDRKTRRGYVVSDKMQKTVVVEVEDRVKHPLYAKVIRRTTKVKAHDEVETAGVGDLVLIAETRPLSATKRWRVVEVLERAK.

The interval 1-22 is disordered; the sequence is MSEQTSAASTTDRGDRKTRRGY.

Belongs to the universal ribosomal protein uS17 family. In terms of assembly, part of the 30S ribosomal subunit.

One of the primary rRNA binding proteins, it binds specifically to the 5'-end of 16S ribosomal RNA. This Kineococcus radiotolerans (strain ATCC BAA-149 / DSM 14245 / SRS30216) protein is Small ribosomal subunit protein uS17.